The following is a 79-amino-acid chain: Conotoxin PnMSGL-03 (79 aa).

Residues 1–20 (MSRLGIMVLTLLLLVFIVTS) form the signal peptide. Residues 21–44 (HQDAGEKQATQRDAINFRWRRSLI) constitute a propeptide that is removed on maturation. Disulfide bonds link Cys52/Cys64, Cys56/Cys73, and Cys63/Cys77. Leu78 carries the post-translational modification Leucine amide.

It belongs to the conotoxin O3 superfamily. As to expression, expressed by the venom duct.

It localises to the secreted. The polypeptide is Conotoxin PnMSGL-03 (Conus pennaceus (Feathered cone)).